The chain runs to 323 residues: Aldo-keto reductase family 1 member C18 (323 aa).

NADP(+) is bound by residues 20 to 24 and aspartate 50; that span reads GFGTY. Catalysis depends on tyrosine 55, which acts as the Proton donor. Substrate is bound at residue histidine 117. NADP(+) contacts are provided by residues 166–167, glutamine 190, 216–221, and 270–280; these read SN, YGALGT, and KSFNEERIREN.

The protein belongs to the aldo/keto reductase family. Monomer. In terms of processing, the N-terminus is blocked. As to expression, corpus luteum (large luteal cells).

Its subcellular location is the cytoplasm. The enzyme catalyses (17R,20S)-17,20-dihydroxypregn-4-en-3-one + NADP(+) = 17alpha-hydroxyprogesterone + NADPH + H(+). The catalysed reaction is (17R,20S)-17,20-dihydroxypregn-4-en-3-one + NAD(+) = 17alpha-hydroxyprogesterone + NADH + H(+). In terms of biological role, catalyzes the conversion of progesterone into 20-alpha-dihydroprogesterone (20 alpha-OHP). This chain is Aldo-keto reductase family 1 member C18 (Akr1c18), found in Rattus norvegicus (Rat).